A 391-amino-acid polypeptide reads, in one-letter code: MKTFLLLLLVLLELGQAPGALHRVPLSRRESLRKKLRAQGQLTELWKSQNLNMDQCSTIQSANEPLINYLDMEYFGTISIGSPPQNFTVIFDTGSSNLWVPSVYCTSPACQTHPVFHPSLSSTYREVGNSFSIQYGTGSLTGIIGADQVSVEGLTVVGQQFGESVQEPGKTFVHAEFDGILGLGYPSLAAGGVTPVFDNMMAQNLVALPMFSVYMSSNPGGSGSELTFGGYDPSHFSGSLNWVPVTKQAYWQIALDGIQVGDSVMFCSEGCQAIVDTGTSLITGPPGKIKQLQEALGATYVDEGYSVQCANLNMMLDVTFIINGVPYTLNPTAYTLLDFVDGMQVCSTGFEGLEIQPPAGPLWILGDVFIRQFYAVFDRGNNRVGLAPAVP.

The first 19 residues, 1–19 (MKTFLLLLLVLLELGQAPG), serve as a signal peptide directing secretion. The propeptide at 20–53 (ALHRVPLSRRESLRKKLRAQGQLTELWKSQNLNM) is activation peptide. The 314-residue stretch at 74 to 387 (YFGTISIGSP…DRGNNRVGLA (314 aa)) folds into the Peptidase A1 domain. Residue asparagine 86 is glycosylated (N-linked (GlcNAc...) asparagine). Aspartate 92 is an active-site residue. 2 cysteine pairs are disulfide-bonded: cysteine 105–cysteine 110 and cysteine 267–cysteine 271. Aspartate 276 is a catalytic residue. Cysteine 309 and cysteine 346 are joined by a disulfide.

It belongs to the peptidase A1 family. In terms of assembly, homodimer; disulfide-linked. Glycosylated. The nature of the carbohydrate chain varies between cell types. Expressed abundantly in the surface and foveolar epithelial cells of the fundic and pyloric stomach mucosa, and at very low levels in the spleen.

Its subcellular location is the endosome. The catalysed reaction is Similar to cathepsin D, but slightly broader specificity.. Its function is as follows. May have a role in immune function. Probably involved in the processing of antigenic peptides during MHC class II-mediated antigen presentation. May play a role in activation-induced lymphocyte depletion in the thymus, and in neuronal degeneration and glial cell activation in the brain. The polypeptide is Cathepsin E (CTSE) (Cavia porcellus (Guinea pig)).